The sequence spans 394 residues: Short-chain dehydrogenase/reductase family 42E member 1 (394 aa).

Catalysis depends on Tyr-153, which acts as the Proton acceptor. Residue Lys-157 coordinates NAD(+). 2 helical membrane-spanning segments follow: residues 283–303 and 367–387; these read LPLTLIYCLAFLVEMTHFIVG and FMLWDGILILLLALSVLTWIL.

The protein belongs to the 3-beta-HSD family.

It is found in the membrane. This Mus musculus (Mouse) protein is Short-chain dehydrogenase/reductase family 42E member 1 (Sdr42e1).